A 738-amino-acid chain; its full sequence is Ethylene receptor 1 (738 aa).

Transmembrane regions (helical) follow at residues 23–43 (ISDFFIAIAYFSIPLELIYFV), 53–73 (WVLVQFGAFIVLCGATHLINL), and 92–112 (VLTAVVSCATALMLVHIIPDL). The Cu cation site is built by C65 and H69. One can recognise a GAF domain in the interval 158–307 (DRHTILKTTL…VVADQVAVAL (150 aa)). The 236-residue stretch at 350 to 585 (VMNHEMRTPM…IFDVKLGISE (236 aa)) folds into the Histidine kinase domain. At H353 the chain carries Phosphohistidine; by autocatalysis. ADP contacts are provided by residues 470–473 (NAVK), D513, K529, S544, and L548. The region spanning 611–729 (KVLVMDENGV…NIRDVLSDLL (119 aa)) is the Response regulatory domain. D659 carries the post-translational modification 4-aspartylphosphate. K714 is covalently cross-linked (Glycyl lysine isopeptide (Lys-Gly) (interchain with G-Cter in ubiquitin)).

This sequence belongs to the ethylene receptor family. Homodimer; disulfide-linked. Heteromer with ERS1, ERS2, ETR2 and EIN4. Interacts with AHP1, AHP2 and AHP3. Interacts with RTE1. Interacts with EIN2. Requires Cu cation as cofactor. Post-translationally, autophosphorylated. Phosphorylation at His-353 modulates the interaction with EIN2. As to expression, leaves, roots, stems, seedlings, flowers, anthers, carpels and ovules.

The protein resides in the endoplasmic reticulum membrane. It catalyses the reaction ATP + protein L-histidine = ADP + protein N-phospho-L-histidine.. In terms of biological role, ethylene receptor related to bacterial two-component regulators. Acts as a redundant negative regulator of ethylene signaling. In the presence of ethylene, the auto-kinase activity of ETR1 is inhibited and the non-phosphorylated kinase domain binds tightly to the corresponding domain of EIN2. The polypeptide is Ethylene receptor 1 (Arabidopsis thaliana (Mouse-ear cress)).